A 698-amino-acid polypeptide reads, in one-letter code: Quillaic acid 3-O-glycosyltransferase CSL1 (698 aa).

Residues alanine 14–tyrosine 34 traverse the membrane as a helical segment. N-linked (GlcNAc...) asparagine glycosylation is present at asparagine 38. Residues glycine 42 to threonine 62 traverse the membrane as a helical segment. Positions 99 and 100 each coordinate UDP-alpha-D-glucose. The active site involves aspartate 129. Asparagine 317 is a glycosylation site (N-linked (GlcNAc...) asparagine). Residue serine 436 is part of the active site. The next 6 membrane-spanning stretches (helical) occupy residues tryptophan 478 to serine 498, tyrosine 508 to leucine 528, tryptophan 546 to leucine 566, isoleucine 581 to lysine 601, methionine 636 to leucine 656, and phenylalanine 669 to isoleucine 689.

The protein belongs to the glycosyltransferase 2 family. Plant cellulose synthase-like G subfamily. In terms of tissue distribution, mainly expressed in flowers and flower buds and, to a lesser extent, in leaves, stems and roots.

Its subcellular location is the golgi apparatus membrane. The protein operates within secondary metabolite biosynthesis; terpenoid biosynthesis. Component of the oleanane-type triterpene saponins (e.g. saponarioside A and saponarioside B) biosynthetic pathway, leading to the production of natural products with detergent properties used as traditional sources of soap. Glycosyltransferase that mediates the conversion of quillaic acid (QA) to QA-mono via the initiation of the C-3 sugar chain. The protein is Quillaic acid 3-O-glycosyltransferase CSL1 of Saponaria officinalis (Common soapwort).